The primary structure comprises 223 residues: 3,4-dihydroxy-2-butanone 4-phosphate synthase (223 aa).

D-ribulose 5-phosphate-binding positions include 39–40 (RE), aspartate 44, 152–156 (RRGHT), and glutamate 176. Glutamate 40 lines the Mg(2+) pocket. Histidine 155 lines the Mg(2+) pocket.

The protein belongs to the DHBP synthase family. In terms of assembly, homodimer. Mg(2+) is required as a cofactor. The cofactor is Mn(2+).

The catalysed reaction is D-ribulose 5-phosphate = (2S)-2-hydroxy-3-oxobutyl phosphate + formate + H(+). The protein operates within cofactor biosynthesis; riboflavin biosynthesis; 2-hydroxy-3-oxobutyl phosphate from D-ribulose 5-phosphate: step 1/1. Functionally, catalyzes the conversion of D-ribulose 5-phosphate to formate and 3,4-dihydroxy-2-butanone 4-phosphate. This is 3,4-dihydroxy-2-butanone 4-phosphate synthase from Desulfovibrio desulfuricans (strain ATCC 27774 / DSM 6949 / MB).